The following is a 573-amino-acid chain: Splicing factor U2af large subunit A (573 aa).

Positions 1–175 (MSEFEDHEGN…KSKQRVSGFD (175 aa)) are disordered. Residues 22–93 (NGGRDGEIED…ERSRDKDRDH (72 aa)) show a composition bias toward basic and acidic residues. The segment covering 94 to 105 (RERHHRSSRHRD) has biased composition (basic residues). Residues 106 to 141 (HSRERGERRERGGRDDDDYRRSRDRDHDRRRDDRGG) are compositionally biased toward basic and acidic residues. Over residues 159–169 (TRSRSPSKSKQ) the composition is skewed to basic residues. 3 consecutive RRM domains span residues 239–322 (RRVY…RPSD), 359–437 (DRIF…RANQ), and 478–564 (QVVT…YPED).

The protein belongs to the splicing factor SR family. As to quaternary structure, component of the spliceosome. Interacts with SUA. Interacts with SF1 in the nucleus.

The protein resides in the nucleus. Necessary for the splicing of pre-mRNA. The chain is Splicing factor U2af large subunit A from Arabidopsis thaliana (Mouse-ear cress).